The following is a 1392-amino-acid chain: Condensin complex subunit 1 (1392 aa).

An interaction with SMC2 and SMC4 region spans residues 1 to 593; the sequence is MSPHNFEFHL…TGSKDSPSVP (593 aa). 2 positions are modified to phosphoserine: S20 and S575. Disordered regions lie at residues 569–602, 945–966, and 1293–1392; these read EASTQDSHGDTDPGLTGSKDSPSVPEPEGSQSND, REEQEHRAKEPKEKTASSETTM, and FETG…RHRS. A compositionally biased stretch (basic and acidic residues) spans 945-960; it reads REEQEHRAKEPKEKTA. A phosphoserine mark is found at S1300, S1305, S1320, and S1323. T1329 is modified (phosphothreonine). The Bipartite nuclear localization signal signature appears at 1332 to 1353; sequence PRRTKPGRPQTQQRKKSQRKAK. Positions 1344 to 1353 are enriched in basic residues; the sequence is QRKKSQRKAK. Residues S1358, S1361, S1362, and S1367 each carry the phosphoserine modification. Over residues 1360–1373 the composition is skewed to acidic residues; it reads ESSEDELSAEMTEE. Phosphothreonine; by CDK1 occurs at positions 1375 and 1380. S1386 carries the phosphoserine modification.

This sequence belongs to the CND1 (condensin subunit 1) family. Component of the condensin complex, which contains the SMC2 and SMC4 heterodimer, and three non SMC subunits that probably regulate the complex: NCAPH/BRRN1, NCAPD2/CAPD2 and NCAPG. Interacts with histones H1 and H3. Post-translationally, phosphorylated by CDK1. Its phosphorylation, as well as that of NCAPH and NCAPG subunits, activates the condensin complex and is required for chromosome condensation.

The protein resides in the nucleus. It localises to the cytoplasm. It is found in the chromosome. Functionally, regulatory subunit of the condensin complex, a complex required for conversion of interphase chromatin into mitotic-like condense chromosomes. The condensin complex probably introduces positive supercoils into relaxed DNA in the presence of type I topoisomerases and converts nicked DNA into positive knotted forms in the presence of type II topoisomerases. May target the condensin complex to DNA via its C-terminal domain. May promote the resolution of double-strand DNA catenanes (intertwines) between sister chromatids. Condensin-mediated compaction likely increases tension in catenated sister chromatids, providing directionality for type II topoisomerase-mediated strand exchanges toward chromatid decatenation. Required for decatenation of non-centromeric ultrafine DNA bridges during anaphase. Early in neurogenesis, may play an essential role to ensure accurate mitotic chromosome condensation in neuron stem cells, ultimately affecting neuron pool and cortex size. This is Condensin complex subunit 1 (Ncapd2) from Mus musculus (Mouse).